The sequence spans 404 residues: Mevalonate kinase (404 aa).

Residues Lys-12, Ser-130, and 135–141 (GAGLGSS) each bind ATP. Mg(2+)-binding residues include Ser-141 and Glu-184. Asp-195 functions as the Proton acceptor in the catalytic mechanism.

This sequence belongs to the GHMP kinase family. Mevalonate kinase subfamily. Homodimer. The cofactor is Mg(2+).

Its subcellular location is the cytoplasm. It localises to the nucleus. It catalyses the reaction (R)-mevalonate + ATP = (R)-5-phosphomevalonate + ADP + H(+). It participates in isoprenoid biosynthesis; isopentenyl diphosphate biosynthesis via mevalonate pathway; isopentenyl diphosphate from (R)-mevalonate: step 1/3. Its activity is regulated as follows. Farnesyl pyrophosphate and geranyl pyrophosphate inhibit mevalonate kinase by binding competitively at the ATP-binding site. Mevalonate kinase; part of the second module of ergosterol biosynthesis pathway that includes the middle steps of the pathway. Erg12 converts mevalonate into 5-phosphomevalonate. The second module is carried out in the vacuole and involves the formation of farnesyl diphosphate, which is also an important intermediate in the biosynthesis of ubiquinone, dolichol, heme and prenylated proteins. Activity by the mevalonate kinase erg12 first converts mevalonate into 5-phosphomevalonate. 5-phosphomevalonate is then further converted to 5-diphosphomevalonate by the phosphomevalonate kinase erg8. The diphosphomevalonate decarboxylase mvd1 then produces isopentenyl diphosphate. The isopentenyl-diphosphate delta-isomerase idi1 then catalyzes the 1,3-allylic rearrangement of the homoallylic substrate isopentenyl (IPP) to its highly electrophilic allylic isomer, dimethylallyl diphosphate (DMAPP). Finally the farnesyl diphosphate synthase fps1 catalyzes the sequential condensation of isopentenyl pyrophosphate with dimethylallyl pyrophosphate, and then with the resultant geranylpyrophosphate to the ultimate product farnesyl pyrophosphate. This is Mevalonate kinase (erg12) from Schizosaccharomyces pombe (strain 972 / ATCC 24843) (Fission yeast).